We begin with the raw amino-acid sequence, 123 residues long: Putative oocyte-secreted protein 1 homolog (123 aa).

The N-terminal stretch at 1-26 (MKTILGFKGLFYLHSLIWTCAGDWSA) is a signal peptide.

It belongs to the PLAC1 family.

Its subcellular location is the secreted. Functionally, may be involved in cell differentiation. The protein is Putative oocyte-secreted protein 1 homolog (OOSP1) of Homo sapiens (Human).